A 281-amino-acid chain; its full sequence is Oxidoreductase-like protein SRL4 (281 aa).

The NADP(+) site is built by L39, T60, K67, K152, and K197. K197 functions as the Lowers pKa of active site Tyr in the catalytic mechanism.

This sequence belongs to the short-chain dehydrogenases/reductases (SDR) family.

Functionally, may be involved in the regulation of dNTP production. Induces the SOS system when expressed in E.coli, therefore, it may play a role in DNA metabolism and/or in genome stability. This chain is Oxidoreductase-like protein SRL4 (SRL4), found in Saccharomyces cerevisiae (strain ATCC 204508 / S288c) (Baker's yeast).